Reading from the N-terminus, the 51-residue chain is Cytochrome bd ubiquinol oxidase subunit X (51 aa).

The Cytoplasmic segment spans residues 1–3 (MWY). Residues 4–26 (FSWLLGLPLAAAFAVLNAMWYEL) form a helical membrane-spanning segment. Residues 27–51 (MDDRARKRLAADPTAELALEGNKHH) lie on the Periplasmic side of the membrane.

It belongs to the cytochrome ubiquinol oxidase subunit X family. In terms of assembly, may be a subunit of cytochrome ubiquinol oxidase.

It localises to the cell inner membrane. The enzyme catalyses 2 a ubiquinol + O2(in) + 4 H(+)(in) = 2 a ubiquinone + 2 H2O(in) + 4 H(+)(out). It functions in the pathway energy metabolism; oxidative phosphorylation. Functionally, required for correct functioning of cytochrome bd oxidase. The polypeptide is Cytochrome bd ubiquinol oxidase subunit X (cydX) (Brucella abortus (strain 2308)).